The following is a 243-amino-acid chain: Thaumatin-like protein 1 (243 aa).

The signal sequence occupies residues M1–S22. Intrachain disulfides connect C31–C242, C79–C88, C93–C100, C148–C231, C153–C214, C161–C177, C181–C190, and C191–C201.

The protein belongs to the thaumatin family.

Its subcellular location is the secreted. It is found in the extracellular space. It localises to the apoplast. Functionally, possesses antifungal activity. This chain is Thaumatin-like protein 1 (TL1), found in Castanea sativa (Sweet chestnut).